The sequence spans 347 residues: Probable zinc transporter 8 (347 aa).

The signal sequence occupies residues 1–27 (MATTTQHMNQIFLVLLLISFAISPAIS). Over 28-51 (TVPKECETDSTDSCIDKTKALPLK) the chain is Extracellular. A helical transmembrane segment spans residues 52–72 (IVAIVAILVTSMIGVAAPLFS). Residues 73 to 83 (RYVTFLHPDGK) lie on the Cytoplasmic side of the membrane. The helical transmembrane segment at 84–104 (IFMIIKCFASGIILGTGFMHV) threads the bilayer. Topologically, residues 105–124 (LPDSFEMLSSPCLEDNPWHK) are extracellular. The helical transmembrane segment at 125-145 (FPFTGFVAMLSGLVTLAIDSI) threads the bilayer. Residues 146-192 (ATSLYTKKAVADDSEERTTPMIIQIDHLPLTTKERSSTCSKQLLRYR) lie on the Cytoplasmic side of the membrane. Residues 193–213 (VIATVLELGIIVHSVVIGLSL) form a helical membrane-spanning segment. The Extracellular segment spans residues 214–224 (GATNDTCTIKG). A helical membrane pass occupies residues 225–245 (LIAALCFHQMFEGMGLGGCIL). Residues 246-254 (QAEYTNVKK) lie on the Cytoplasmic side of the membrane. A helical transmembrane segment spans residues 255–275 (FVMAFFFAVTTPSGIALGIAL). The Extracellular portion of the chain corresponds to 276–286 (SSVYKDNSPTA). Residues 287–307 (LITVGLLNACSAGLLIYMALV) traverse the membrane as a helical segment. Residues 308–326 (DLLAAEFMGSMLQRSVKLQ) are Cytoplasmic-facing. A helical transmembrane segment spans residues 327–347 (LNCFGAALLGCGGMSVLAKWA).

Belongs to the ZIP transporter (TC 2.A.5) family.

Its subcellular location is the cell membrane. Its function is as follows. Probably mediates zinc uptake from the rhizosphere. This Arabidopsis thaliana (Mouse-ear cress) protein is Probable zinc transporter 8 (ZIP8).